The chain runs to 401 residues: NADH-dependent flavin oxidoreductase iliE (401 aa).

FMN-binding positions include 25-28 (ASMS) and Q107. A substrate-binding site is contributed by 188 to 191 (HAAH). Residue 346–347 (AR) participates in FMN binding.

Belongs to the NADH:flavin oxidoreductase/NADH oxidase family.

NADH-dependent flavin oxidoreductase; part of the gene cluster that mediates the biosynthesis of ilicicolin H, a 4-hydroxy-2-pyridonealkaloid that has potent and broad antifungal activities by inhibiting the mitochondrial respiration chain. The biosynthesis of ilicicolin H starts with formation of the tetramic acid by the hybrid PKS-NRPS synthetase iliA with the partnering trans-enoyl reductase iliB since iliA lacks a designated enoylreductase (ER) domain. The cytochrome P450 monooxygenase iliC then catalyzes the ring expansion of the tetramate to the acyclic 2-pyridone. The pericyclase iliD further converts the acyclic 2-pyridone into 8-epi-ilicicolin H. 8-epi-ilicicolin H might then spontaneously convert to ilicicolin H since ilicicolin H is produced in the absence of the epimerase iliE, in contrast to what was observed for the Talaromyces variabilis ilicolin H biosynthetic pathway. This Hypocrea jecorina (strain QM6a) (Trichoderma reesei) protein is NADH-dependent flavin oxidoreductase iliE.